The sequence spans 141 residues: HTH-type transcriptional repressor NsrR (141 aa).

An HTH rrf2-type domain is found at 2-129 (QLTSFTDYGL…DNYTLADMVK (128 aa)). Residues 28-51 (ISQVTEVYGVSRNHMVKIINQLSR) constitute a DNA-binding region (H-T-H motif). Residues Cys91, Cys96, and Cys102 each contribute to the [2Fe-2S] cluster site.

The cofactor is [2Fe-2S] cluster.

Its function is as follows. Nitric oxide-sensitive repressor of genes involved in protecting the cell against nitrosative stress. May require iron for activity. This chain is HTH-type transcriptional repressor NsrR, found in Yersinia pseudotuberculosis serotype O:1b (strain IP 31758).